Consider the following 668-residue polypeptide: Biosynthetic arginine decarboxylase (668 aa).

Lys-105 bears the N6-(pyridoxal phosphate)lysine mark. Leu-286 to Tyr-296 contacts substrate.

This sequence belongs to the Orn/Lys/Arg decarboxylase class-II family. SpeA subfamily. The cofactor is Mg(2+). Requires pyridoxal 5'-phosphate as cofactor.

It carries out the reaction L-arginine + H(+) = agmatine + CO2. Its function is as follows. Catalyzes the biosynthesis of agmatine from arginine. This chain is Biosynthetic arginine decarboxylase, found in Rhodopirellula baltica (strain DSM 10527 / NCIMB 13988 / SH1).